We begin with the raw amino-acid sequence, 149 residues long: Transcriptional repressor NrdR (149 aa).

Residues 3 to 34 fold into a zinc finger; it reads CPFCAAVDTKVIDSRLVGDGSQVRRRRQCLVC. Residues 49-139 enclose the ATP-cone domain; it reads PRVIKSDEVR…VYRSFEDIRE (91 aa).

The protein belongs to the NrdR family. Requires Zn(2+) as cofactor.

Its function is as follows. Negatively regulates transcription of bacterial ribonucleotide reductase nrd genes and operons by binding to NrdR-boxes. The protein is Transcriptional repressor NrdR of Serratia proteamaculans (strain 568).